The sequence spans 575 residues: Flagellin A (575 aa).

3 repeat units span residues 405–409 (GSGFS), 411–415 (GSGFS), and 447–450 (GSGF).

The protein belongs to the bacterial flagellin family. In terms of assembly, heteromer of flaA and flaB.

It localises to the secreted. The protein localises to the bacterial flagellum. In terms of biological role, flagellin is the subunit protein which polymerizes to form the filaments of bacterial flagella. This chain is Flagellin A (flaA), found in Campylobacter jejuni.